The primary structure comprises 301 residues: DNA repair protein RecO (301 aa).

Residues 272 to 301 form a disordered region; sequence PTPSGQGSPVAAAAFSEEDSETLGSNLKKL.

It belongs to the RecO family.

Involved in DNA repair and RecF pathway recombination. In Synechococcus sp. (strain JA-3-3Ab) (Cyanobacteria bacterium Yellowstone A-Prime), this protein is DNA repair protein RecO.